Reading from the N-terminus, the 223-residue chain is NADH-quinone oxidoreductase subunit C (223 aa).

Belongs to the complex I 30 kDa subunit family. As to quaternary structure, NDH-1 is composed of 14 different subunits. Subunits NuoB, C, D, E, F, and G constitute the peripheral sector of the complex.

Its subcellular location is the cell inner membrane. It carries out the reaction a quinone + NADH + 5 H(+)(in) = a quinol + NAD(+) + 4 H(+)(out). Its function is as follows. NDH-1 shuttles electrons from NADH, via FMN and iron-sulfur (Fe-S) centers, to quinones in the respiratory chain. The immediate electron acceptor for the enzyme in this species is believed to be ubiquinone. Couples the redox reaction to proton translocation (for every two electrons transferred, four hydrogen ions are translocated across the cytoplasmic membrane), and thus conserves the redox energy in a proton gradient. The polypeptide is NADH-quinone oxidoreductase subunit C (Hydrogenovibrio crunogenus (strain DSM 25203 / XCL-2) (Thiomicrospira crunogena)).